The following is a 450-amino-acid chain: Tubulin alpha-3 chain (450 aa).

Q11 contacts GTP. Residue K40 is modified to N6-acetyllysine. Residues E71, G144, T145, T179, N206, and N228 each contribute to the GTP site. E71 contributes to the Mg(2+) binding site. E254 is an active-site residue.

Belongs to the tubulin family. In terms of assembly, dimer of alpha and beta chains. A typical microtubule is a hollow water-filled tube with an outer diameter of 25 nm and an inner diameter of 15 nM. Alpha-beta heterodimers associate head-to-tail to form protofilaments running lengthwise along the microtubule wall with the beta-tubulin subunit facing the microtubule plus end conferring a structural polarity. Microtubules usually have 13 protofilaments but different protofilament numbers can be found in some organisms and specialized cells. Mg(2+) is required as a cofactor. In terms of processing, undergoes a tyrosination/detyrosination cycle, the cyclic removal and re-addition of a C-terminal tyrosine residue by the enzymes tubulin tyrosine carboxypeptidase (TTCP) and tubulin tyrosine ligase (TTL), respectively. Post-translationally, acetylation of alpha chains at Lys-40 stabilizes microtubules and affects affinity and processivity of microtubule motors. This modification has a role in multiple cellular functions, ranging from cell motility, cell cycle progression or cell differentiation to intracellular trafficking and signaling.

It localises to the cytoplasm. The protein resides in the cytoskeleton. It catalyses the reaction GTP + H2O = GDP + phosphate + H(+). In terms of biological role, tubulin is the major constituent of microtubules, a cylinder consisting of laterally associated linear protofilaments composed of alpha- and beta-tubulin heterodimers. Microtubules grow by the addition of GTP-tubulin dimers to the microtubule end, where a stabilizing cap forms. Below the cap, tubulin dimers are in GDP-bound state, owing to GTPase activity of alpha-tubulin. The sequence is that of Tubulin alpha-3 chain (TUBA3) from Zea mays (Maize).